The chain runs to 490 residues: Tegument protein VP16 (490 aa).

The disordered stretch occupies residues M12–P35. 4 positions are modified to phosphoserine: S18, S353, S411, and S452. The interval S411 to G490 is transcriptional activation.

It belongs to the herpesviridae tegument protein VP16 protein family. In terms of assembly, interacts with tegument protein VP22. Interacts with gH (via C-terminus). Interacts with the virion host shutoff protein (vhs). Interacts with VP11/12. Associates with the VP16-induced complex; binding to host HCFC1 activates VP16 for association with the octamer motif-binding host protein POU2F1, to form a multiprotein-DNA complex responsible for activating transcription of the viral immediate early genes. Interacts with host P-TEFb; this interaction recruits P-TEFb to the viral alpha-gene promoters and overcomes transcriptional inhibition by ICP22 and promotes transcription of IE genes.

The protein localises to the virion tegument. It localises to the host nucleus. In the early stage of viral replication, acts as a transcriptional activator of immediate-early (IE) gene products (alpha-genes), which is released by invading virions. Recruits P-TEFb to the viral alpha-gene promoters and overcomes transcriptional inhibition by ICP22 to promote transcription of IE genes. VP16-induced complex represents a regulatory switch: when it is on, it promotes IE-gene expression and thus lytic infection, and when it is off, it limits IE-gene transcription favoring latent infection. Acts as a key activator of lytic infection by initiating the lytic program through the assembly of the transcriptional regulatory VP16-induced complex composed of VP16 and two cellular factors, HCFC1 and POU2F1. This complex recognizes the core motif 'TAATGARAT' in alpha-gene promoters. In the late stage of viral replication, VP16, as a tegument, is involved in viral assembly. Its function is as follows. May play a role in the aggregation of tegument proteins around nucleocapsids during virus morphogenesis. This is Tegument protein VP16 from Human herpesvirus 1 (strain 17) (HHV-1).